The following is a 1090-amino-acid chain: DNA damage-binding protein 1 (1090 aa).

Belongs to the DDB1 family. Component of the UV-DDB complex, which is composed of DDB1 and DDB2. As to expression, expressed in proliferating tissues. Highly expressed in shoot apical meristem (SAM). Expressed in roots, young leaves, flag leaves, and panicles. Not detected in mature leaves.

Its subcellular location is the nucleus. In terms of biological role, required for DNA repair. Binds to DDB2 to form the UV-damaged DNA-binding protein complex (the UV-DDB complex). The UV-DDB complex may recognize UV-induced DNA damage and recruit proteins of the nucleotide excision repair pathway (the NER pathway) to initiate DNA repair. May function as the substrate recognition module for a DCX (DDB1-CUL4-X-box) E3 ubiquitin-protein ligase complex. In Oryza sativa subsp. japonica (Rice), this protein is DNA damage-binding protein 1.